The primary structure comprises 159 residues: 2-C-methyl-D-erythritol 2,4-cyclodiphosphate synthase (159 aa).

The a divalent metal cation site is built by aspartate 8 and histidine 10. 4-CDP-2-C-methyl-D-erythritol 2-phosphate contacts are provided by residues aspartate 8 to histidine 10 and histidine 34 to serine 35. Histidine 42 contributes to the a divalent metal cation binding site. 4-CDP-2-C-methyl-D-erythritol 2-phosphate contacts are provided by residues aspartate 56–glycine 58, phenylalanine 61–aspartate 65, phenylalanine 139, and arginine 142.

This sequence belongs to the IspF family. As to quaternary structure, homotrimer. A divalent metal cation is required as a cofactor.

The enzyme catalyses 4-CDP-2-C-methyl-D-erythritol 2-phosphate = 2-C-methyl-D-erythritol 2,4-cyclic diphosphate + CMP. Its pathway is isoprenoid biosynthesis; isopentenyl diphosphate biosynthesis via DXP pathway; isopentenyl diphosphate from 1-deoxy-D-xylulose 5-phosphate: step 4/6. Functionally, involved in the biosynthesis of isopentenyl diphosphate (IPP) and dimethylallyl diphosphate (DMAPP), two major building blocks of isoprenoid compounds. Catalyzes the conversion of 4-diphosphocytidyl-2-C-methyl-D-erythritol 2-phosphate (CDP-ME2P) to 2-C-methyl-D-erythritol 2,4-cyclodiphosphate (ME-CPP) with a corresponding release of cytidine 5-monophosphate (CMP). In Syntrophus aciditrophicus (strain SB), this protein is 2-C-methyl-D-erythritol 2,4-cyclodiphosphate synthase.